The following is a 786-amino-acid chain: DNA double-strand break repair Rad50 ATPase (786 aa).

Residues K13, 33–39 (NGSGKTT), and Q138 contribute to the ATP site. Coiled coils occupy residues 194–249 (LKAE…LKSI), 337–455 (EKAK…RALE), and 551–650 (ALER…VKAL). The region spanning 366 to 459 (EIAELQNKIN…KIRALEKYKG (94 aa)) is the Zinc-hook domain. 2 residues coordinate Zn(2+): C411 and C414.

Belongs to the SMC family. RAD50 subfamily. Homodimer. Forms a heterotetramer composed of two Mre11 subunits and two Rad50 subunits. Zn(2+) serves as cofactor.

Part of the Rad50/Mre11 complex, which is involved in the early steps of DNA double-strand break (DSB) repair. The complex may facilitate opening of the processed DNA ends to aid in the recruitment of HerA and NurA. Rad50 controls the balance between DNA end bridging and DNA resection via ATP-dependent structural rearrangements of the Rad50/Mre11 complex. This chain is DNA double-strand break repair Rad50 ATPase, found in Nanoarchaeum equitans (strain Kin4-M).